We begin with the raw amino-acid sequence, 204 residues long: Putative uracil phosphoribosyltransferase urg2 (204 aa).

5-phospho-alpha-D-ribose 1-diphosphate is bound by residues arginine 75, arginine 100, and 126-134 (DPVMATGGT). Tyrosine 187 is a binding site for D-ribose 5-phosphate. Uracil is bound by residues leucine 188 and 193-195 (GDI). Aspartate 194 is a 5-phospho-alpha-D-ribose 1-diphosphate binding site.

This sequence belongs to the UPRTase family. Mg(2+) is required as a cofactor.

The protein localises to the cytoplasm. The protein resides in the nucleus. It catalyses the reaction UMP + diphosphate = 5-phospho-alpha-D-ribose 1-diphosphate + uracil. The protein operates within pyrimidine metabolism; UMP biosynthesis via salvage pathway; UMP from uracil: step 1/1. Allosterically activated by GTP. Catalyzes the conversion of uracil and 5-phospho-alpha-D-ribose 1-diphosphate (PRPP) to UMP and diphosphate. The chain is Putative uracil phosphoribosyltransferase urg2 from Schizosaccharomyces pombe (strain 972 / ATCC 24843) (Fission yeast).